Reading from the N-terminus, the 252-residue chain is 3-dehydroquinate dehydratase (252 aa).

3-dehydroquinate is bound by residues Ser21, 46-48 (EWR), and Arg82. Residue His143 is the Proton donor/acceptor of the active site. The Schiff-base intermediate with substrate role is filled by Lys170. Arg213, Ser232, and Gln236 together coordinate 3-dehydroquinate.

It belongs to the type-I 3-dehydroquinase family. As to quaternary structure, homodimer.

The enzyme catalyses 3-dehydroquinate = 3-dehydroshikimate + H2O. It participates in metabolic intermediate biosynthesis; chorismate biosynthesis; chorismate from D-erythrose 4-phosphate and phosphoenolpyruvate: step 3/7. In terms of biological role, involved in the third step of the chorismate pathway, which leads to the biosynthesis of aromatic amino acids. Catalyzes the cis-dehydration of 3-dehydroquinate (DHQ) and introduces the first double bond of the aromatic ring to yield 3-dehydroshikimate. This chain is 3-dehydroquinate dehydratase, found in Escherichia coli O6:K15:H31 (strain 536 / UPEC).